The following is a 163-amino-acid chain: C-type lectin lectoxin-Lio1 (163 aa).

The signal sequence occupies residues 1–21 (MERFIFAALLVVALSLSGTGA). 3 disulfides stabilise this stretch: C25/C36, C53/C152, and C127/C144. Residues 32–153 (SDGYCYKVFK…CRSKRYFICK (122 aa)) form the C-type lectin domain. The Mannose-binding motif lies at 117–119 (EPN). The Ca(2+) site is built by E125 and D141.

It belongs to the true venom lectin family. As to expression, expressed by the venom gland.

It localises to the secreted. In terms of biological role, mannose-binding lectin which recognizes specific carbohydrate structures and agglutinates a variety of animal cells by binding to cell-surface glycoproteins and glycolipids. May be a calcium-dependent lectin. The polypeptide is C-type lectin lectoxin-Lio1 (Erythrolamprus poecilogyrus (Water snake)).